Consider the following 358-residue polypeptide: UDP-N-acetylglucosamine--N-acetylmuramyl-(pentapeptide) pyrophosphoryl-undecaprenol N-acetylglucosamine transferase (358 aa).

UDP-N-acetyl-alpha-D-glucosamine is bound by residues 10 to 12 (TGG), Asn124, Arg165, Ser191, Ile246, and Gln291.

This sequence belongs to the glycosyltransferase 28 family. MurG subfamily.

The protein localises to the cell inner membrane. It carries out the reaction di-trans,octa-cis-undecaprenyl diphospho-N-acetyl-alpha-D-muramoyl-L-alanyl-D-glutamyl-meso-2,6-diaminopimeloyl-D-alanyl-D-alanine + UDP-N-acetyl-alpha-D-glucosamine = di-trans,octa-cis-undecaprenyl diphospho-[N-acetyl-alpha-D-glucosaminyl-(1-&gt;4)]-N-acetyl-alpha-D-muramoyl-L-alanyl-D-glutamyl-meso-2,6-diaminopimeloyl-D-alanyl-D-alanine + UDP + H(+). It participates in cell wall biogenesis; peptidoglycan biosynthesis. Its function is as follows. Cell wall formation. Catalyzes the transfer of a GlcNAc subunit on undecaprenyl-pyrophosphoryl-MurNAc-pentapeptide (lipid intermediate I) to form undecaprenyl-pyrophosphoryl-MurNAc-(pentapeptide)GlcNAc (lipid intermediate II). In Citrifermentans bemidjiense (strain ATCC BAA-1014 / DSM 16622 / JCM 12645 / Bem) (Geobacter bemidjiensis), this protein is UDP-N-acetylglucosamine--N-acetylmuramyl-(pentapeptide) pyrophosphoryl-undecaprenol N-acetylglucosamine transferase.